Reading from the N-terminus, the 424-residue chain is MSEATLSSKQTIEWENKYSAHNYHPLPVVFHKAKGAHVWDPEGKLYLDFLSAYSAVNQGHCHPHIIKALTEQAQTLTLSSRAFHNDVYAQFAKFVTEFFGFETVLPMNTGAEAVETALKLARRWGYMKKNIPQDKAIILGAEGNFHGRTFGAISLSTDYEDSKLHFGPFVPNVASGHSVHKIRYGHAEDFVPILESPEGKNVAAIILEPIQGEAGIVVPPADYFPKVSALCRKHNVLLIVDEIQTGIGRTGELLCYDHYKAEAKPDIVLLGKALSGGVLPVSCVLSSHDIMSCFTPGSHGSTFGGNPLASRVAIAALEVIRDEKLCQRAAQLGSSFIAQLKALQAKSNGIISEVRGMGLLTAIVIDPSKANGKTAWDLCLLMKDHGLLAKPTHDHIIRLAPPLVISEEDLQTGVETIAKCIDLL.

Lys272 is subject to N6-(pyridoxal phosphate)lysine. Lys390 is covalently cross-linked (Glycyl lysine isopeptide (Lys-Gly) (interchain with G-Cter in ubiquitin)).

This sequence belongs to the class-III pyridoxal-phosphate-dependent aminotransferase family. It depends on pyridoxal 5'-phosphate as a cofactor.

The protein resides in the cytoplasm. The catalysed reaction is a 2-oxocarboxylate + L-ornithine = L-glutamate 5-semialdehyde + an L-alpha-amino acid. The protein operates within amino-acid biosynthesis; L-proline biosynthesis; L-glutamate 5-semialdehyde from L-ornithine: step 1/1. By arginine and urea. Functionally, catalyzes the transamination of ornithine into L-glutamate gamma-semialdehyde, the second step of arginine degradation. The sequence is that of Ornithine aminotransferase (CAR2) from Saccharomyces cerevisiae (strain ATCC 204508 / S288c) (Baker's yeast).